A 233-amino-acid chain; its full sequence is Ribose-5-phosphate isomerase A (233 aa).

Substrate-binding positions include 28–31, 83–86, and 96–99; these read TGST, DGAD, and KGGG. Residue Glu105 is the Proton acceptor of the active site. Lys123 contacts substrate.

Belongs to the ribose 5-phosphate isomerase family. As to quaternary structure, homodimer.

It carries out the reaction aldehydo-D-ribose 5-phosphate = D-ribulose 5-phosphate. It participates in carbohydrate degradation; pentose phosphate pathway; D-ribose 5-phosphate from D-ribulose 5-phosphate (non-oxidative stage): step 1/1. Functionally, catalyzes the reversible conversion of ribose-5-phosphate to ribulose 5-phosphate. The sequence is that of Ribose-5-phosphate isomerase A from Rhizobium rhizogenes (strain K84 / ATCC BAA-868) (Agrobacterium radiobacter).